Reading from the N-terminus, the 274-residue chain is Receptor-like protein 44 (274 aa).

A signal peptide spans M1–A24. At D25–K223 the chain is on the extracellular side. N48, N82, and N95 each carry an N-linked (GlcNAc...) asparagine glycan. LRR repeat units lie at residues C96–V121, L123–C144, A145–L168, and A169–R192. The N-linked (GlcNAc...) asparagine glycan is linked to N127. N191 and N200 each carry an N-linked (GlcNAc...) asparagine glycan. Residues G224 to I244 traverse the membrane as a helical segment. Over S245 to Y274 the chain is Cytoplasmic.

The protein belongs to the RLP family.

The protein resides in the cell membrane. The sequence is that of Receptor-like protein 44 from Arabidopsis thaliana (Mouse-ear cress).